The chain runs to 320 residues: rRNA 2'-O-methyltransferase fibrillarin 2 (320 aa).

Residues 1 to 79 are disordered; the sequence is MRPPLTGSGG…GRGGMKGGSK (79 aa). Gly residues-rich tracts occupy residues 7–44 and 57–76; these read GSGG…GGRG and PPRG…GMKG. S-adenosyl-L-methionine contacts are provided by residues 167-168, 186-187, 211-212, and 231-234; these read TT, EF, DA, and DVAQ.

It belongs to the methyltransferase superfamily. Fibrillarin family. Component of box C/D small nucleolar ribonucleoprotein (snoRNP) particles. Interacts with groundnut rosette virus long-distance movement protein; this interaction is required for virus long-distance movement protein transiting through host Cajal body and nucleolus, relocalization of fibrillarin to the cytoplasm, and in presence of viral RNA, leads to the formation of stable RNPs. Interacts (via GAR domain) with the hordeivirus TGB1 movement protein (via the first 82 amino acid residues). Interacts with PRMT11 and PRMT12. Interacts with MED19A. Methylated by PRMT11 and PRMT12. In terms of tissue distribution, expressed in roots and flowers. Expressed in leaves and stems. Expression levels decrease during aging.

It localises to the nucleus. Its subcellular location is the nucleolus. It carries out the reaction a ribonucleotide in rRNA + S-adenosyl-L-methionine = a 2'-O-methylribonucleotide in rRNA + S-adenosyl-L-homocysteine + H(+). It catalyses the reaction L-glutaminyl-[histone H2A] + S-adenosyl-L-methionine = N(5)-methyl-L-glutaminyl-[histone H2A] + S-adenosyl-L-homocysteine + H(+). In terms of biological role, S-adenosyl-L-methionine-dependent methyltransferase that has the ability to methylate both RNAs and proteins. Involved in pre-rRNA processing. Utilizes the methyl donor S-adenosyl-L-methionine to catalyze the site-specific 2'-hydroxyl methylation of ribose moieties in pre-ribosomal RNA. Site specificity is provided by a guide RNA that base pairs with the substrate. Methylation occurs at a characteristic distance from the sequence involved in base pairing with the guide RNA. Also acts as a protein methyltransferase by mediating methylation of 'Gln-105' of histone H2A (H2AQ105me), a modification that impairs binding of the FACT complex and is specifically present at 35S ribosomal DNA locus. Acts as a negative regulator of expression of immune responsive genes, including pathogenesis-related gene 1 (PR1), and of resistance against bacterial pathogen. Binds to MED19A, a positive regulator of PR1 expression, to repress the activator activity of MED19A. In response to the bacterial pathogen-associated molecular pattern (PAMP) elf18, associates with the long non-coding RNA (lncRNA) ELENA1 (At4g16355), and releases its repression of MED19A. Possesses ribonuclease activity toward rRNA in vitro. Binds phosphoinositides, phospholipids and phosphatidic acid in vitro. This Arabidopsis thaliana (Mouse-ear cress) protein is rRNA 2'-O-methyltransferase fibrillarin 2.